The chain runs to 385 residues: Methionine aminopeptidase 1 (385 aa).

The C6H2-type zinc-finger motif lies at 6–59 (TRVCETAGCSSEAKLQCPTCLKLGIQGSYFCSQECFKGSWATHKLLHKKAKDEK). The Zn(2+) site is built by Cys9, Cys14, Cys22, Cys25, Cys36, Cys40, His48, and His52. His203 serves as a coordination point for a protein. Zn(2+) is bound by residues Asp220, Asp231, and His294. An a protein-binding site is contributed by His301. Glu327 and Glu358 together coordinate Zn(2+).

The protein belongs to the peptidase M24A family. Methionine aminopeptidase type 1 subfamily. Associates with the 60S ribosomal subunit of the 80S translational complex. Requires Zn(2+) as cofactor. Co(2+) serves as cofactor. The cofactor is Mn(2+). Fe(2+) is required as a cofactor.

The protein resides in the cytoplasm. The enzyme catalyses Release of N-terminal amino acids, preferentially methionine, from peptides and arylamides.. Functionally, cotranslationally removes the N-terminal methionine from nascent proteins. The N-terminal methionine is often cleaved when the second residue in the primary sequence is small and uncharged (Met-Ala-, Cys, Gly, Pro, Ser, Thr, or Val). The sequence is that of Methionine aminopeptidase 1 (METAP1) from Gallus gallus (Chicken).